The primary structure comprises 50 residues: Sperm protamine P1 (50 aa).

Cystine bridges form between cysteine 7-cysteine 15 and cysteine 38-cysteine 46.

Belongs to the protamine P1 family. As to quaternary structure, cross-linked by interchain disulfide bonds around the DNA-helix. As to expression, testis.

It localises to the nucleus. Its subcellular location is the chromosome. Protamines substitute for histones in the chromatin of sperm during the haploid phase of spermatogenesis. They compact sperm DNA into a highly condensed, stable and inactive complex. In Equus caballus (Horse), this protein is Sperm protamine P1 (PRM1).